The primary structure comprises 354 residues: Protein RecA (354 aa).

Residue 78–85 (GPESSGKT) coordinates ATP.

Belongs to the RecA family.

It is found in the cytoplasm. Its function is as follows. Can catalyze the hydrolysis of ATP in the presence of single-stranded DNA, the ATP-dependent uptake of single-stranded DNA by duplex DNA, and the ATP-dependent hybridization of homologous single-stranded DNAs. It interacts with LexA causing its activation and leading to its autocatalytic cleavage. The sequence is that of Protein RecA from Zymomonas mobilis subsp. mobilis (strain ATCC 31821 / ZM4 / CP4).